Reading from the N-terminus, the 559-residue chain is MASAGGEVVVVDPAAAAVAPDVEHHAPAPRLTPAGSGGRLMAELLGVFNGLTERMGDDVATSSSWTLLFRALKLALPALRDAAGGRSLARALIVAASLADLQMDAEVISAGIVRQAMDAGAVAMADAEAQLGPGAAALLLESLDVKNAPSRVDVADEEAASAVRNRILSGYDVRAVILELAIRLDAMKHLDGVPKHQQRTTSLEVLKVFAPLAHAVGAGALSKELEDLSFWRLYPQAYAQVDQWLSGQEDDCKRVLATCKDDLLQALAADDELRHTVAGFDVKGRYKSRFSAMKKLVKDGRRPEDVHDILGMRVILDHRAGAGDGHRACIRTHEVIKGMWKDVPARTKDYIARPKGDGYRSLHIAVDMSEPGPEGKKRPLMEVQIRTKEMNDAAVFGHALYKGCLADPEEAKRLKDIMLAAAEVAAQHLRDEPATGDQTGVPAAAAAAASAGNIERAFRLLDKNGDGRISMEELTELMEDLGAGGKDAEELMRLLDDNNDGSLSSDEFALFQKRVELKAKLEDKDDEYKEILRQKLQKVDDTGLIHVYRKNLSDKLVSG.

A chloroplast-targeting transit peptide spans 1–37; it reads MASAGGEVVVVDPAAAAVAPDVEHHAPAPRLTPAGSG. One can recognise an HD domain in the interval 87-187; that stretch reads SLARALIVAA…LELAIRLDAM (101 aa). 2 consecutive EF-hand domains span residues 449 to 484 and 486 to 518; these read ASAGNIERAFRLLDKNGDGRISMEELTELMEDLGAG and KDAEELMRLLDDNNDGSLSSDEFALFQKRVELK. Residues D462, N464, D466, R468, E473, D496, N498, D500, S502, and E507 each coordinate Ca(2+).

This sequence belongs to the RelA/SpoT family. As to expression, expressed in shoots.

Its subcellular location is the plastid. It is found in the chloroplast. The enzyme catalyses GTP + ATP = guanosine 3'-diphosphate 5'-triphosphate + AMP. Its activity is regulated as follows. Activated by calcium. Functionally, possesses calcium-dependent ppGpp (guanosine 3'-diphosphate 5'-diphosphate) synthetase activity in vitro and is able to functionally complement E.coli relA mutants. May be involved in a rapid plant ppGpp-mediated response to pathogens and other stresses. The protein is GTP diphosphokinase CRSH2, chloroplastic of Oryza sativa subsp. japonica (Rice).